The sequence spans 201 residues: Rho GDP-dissociation inhibitor 2 (201 aa).

Residues 1-38 are disordered; sequence MTEKAPEPHVEEDDDDELDSKLNYKPPPQKSLKELQEM. At threonine 2 the chain carries N-acetylthreonine. Position 21 is an N6-acetyllysine (lysine 21). Tyrosine 24 carries the phosphotyrosine modification. An N6-acetyllysine mark is found at lysine 25, lysine 40, lysine 47, lysine 102, and lysine 124. Serine 145 carries the post-translational modification Phosphoserine. At lysine 175 the chain carries N6-acetyllysine.

The protein belongs to the Rho GDI family. As to quaternary structure, interacts with RHOA. Interacts with RAC1. Interacts with RAC2. Interacts with CDC42. In terms of tissue distribution, detected in bone marrow, thymus and spleen.

The protein resides in the cytoplasm. It is found in the cytosol. Functionally, regulates the GDP/GTP exchange reaction of the Rho proteins by inhibiting the dissociation of GDP from them, and the subsequent binding of GTP to them. Regulates reorganization of the actin cytoskeleton mediated by Rho family members. This Homo sapiens (Human) protein is Rho GDP-dissociation inhibitor 2 (ARHGDIB).